We begin with the raw amino-acid sequence, 93 residues long: UPF0147 protein PH1921.2 (93 aa).

This sequence belongs to the UPF0147 family.

The polypeptide is UPF0147 protein PH1921.2 (Pyrococcus horikoshii (strain ATCC 700860 / DSM 12428 / JCM 9974 / NBRC 100139 / OT-3)).